The chain runs to 258 residues: Snake venom serine protease CL2 (258 aa).

An N-terminal signal peptide occupies residues methionine 1–alanine 18. The propeptide occupies glutamine 19 to leucine 24. The Peptidase S1 domain occupies valine 25–alanine 249. 6 disulfides stabilise this stretch: cysteine 31–cysteine 163, cysteine 50–cysteine 66, cysteine 98–cysteine 256, cysteine 142–cysteine 210, cysteine 174–cysteine 189, and cysteine 200–cysteine 225. Residue asparagine 44 is glycosylated (N-linked (GlcNAc...) asparagine). Histidine 65 acts as the Charge relay system in catalysis. An N-linked (GlcNAc...) asparagine glycan is attached at asparagine 103. The active-site Charge relay system is aspartate 110. N-linked (GlcNAc...) asparagine glycosylation is present at asparagine 121. Catalysis depends on serine 204, which acts as the Charge relay system. N-linked (GlcNAc...) asparagine glycosylation occurs at asparagine 251.

This sequence belongs to the peptidase S1 family. Snake venom subfamily. In terms of assembly, monomer. As to expression, expressed by the venom gland.

The protein resides in the secreted. Its function is as follows. Snake venom serine protease that may act in the hemostasis system of the prey. This is Snake venom serine protease CL2 from Trimeresurus stejnegeri (Chinese green tree viper).